The following is a 137-amino-acid chain: NADH-quinone oxidoreductase subunit A 2 (137 aa).

The next 3 membrane-spanning stretches (helical) occupy residues 12–32, 66–86, and 95–115; these read WGFA…LGVS, FYLV…LFAW, and WAGL…LVYL.

The protein belongs to the complex I subunit 3 family. In terms of assembly, NDH-1 is composed of 13 different subunits. Subunits NuoA, H, J, K, L, M, N constitute the membrane sector of the complex.

It localises to the cell inner membrane. It catalyses the reaction a quinone + NADH + 5 H(+)(in) = a quinol + NAD(+) + 4 H(+)(out). Its function is as follows. NDH-1 shuttles electrons from NADH, via FMN and iron-sulfur (Fe-S) centers, to quinones in the respiratory chain. The immediate electron acceptor for the enzyme in this species is believed to be ubiquinone. Couples the redox reaction to proton translocation (for every two electrons transferred, four hydrogen ions are translocated across the cytoplasmic membrane), and thus conserves the redox energy in a proton gradient. The chain is NADH-quinone oxidoreductase subunit A 2 from Pseudomonas aeruginosa (strain ATCC 15692 / DSM 22644 / CIP 104116 / JCM 14847 / LMG 12228 / 1C / PRS 101 / PAO1).